Here is a 239-residue protein sequence, read N- to C-terminus: Fatty acid metabolism regulator protein (239 aa).

Residues 6 to 74 enclose the HTH gntR-type domain; that stretch reads KGPASFAEKY…HGKPTRVNNF (69 aa). The H-T-H motif DNA-binding region spans 34–53; sequence ERELSELIGVTRTTLREVLQ.

Homodimer.

The protein resides in the cytoplasm. Functionally, multifunctional regulator of fatty acid metabolism. The protein is Fatty acid metabolism regulator protein of Shewanella halifaxensis (strain HAW-EB4).